The sequence spans 90 residues: DNA-directed RNA polymerase subunit omega (90 aa).

It belongs to the RNA polymerase subunit omega family. In terms of assembly, the RNAP catalytic core consists of 2 alpha, 1 beta, 1 beta' and 1 omega subunit. When a sigma factor is associated with the core the holoenzyme is formed, which can initiate transcription.

It carries out the reaction RNA(n) + a ribonucleoside 5'-triphosphate = RNA(n+1) + diphosphate. Functionally, promotes RNA polymerase assembly. Latches the N- and C-terminal regions of the beta' subunit thereby facilitating its interaction with the beta and alpha subunits. This is DNA-directed RNA polymerase subunit omega from Hamiltonella defensa subsp. Acyrthosiphon pisum (strain 5AT).